The primary structure comprises 177 residues: Nucleoside triphosphate/diphosphate phosphatase (177 aa).

The active-site Proton donor is R23. The Mg(2+) site is built by N87, D103, D105, D107, D120, and E123.

Belongs to the Ntdp family. The cofactor is Mg(2+).

The catalysed reaction is a ribonucleoside 5'-triphosphate + H2O = a ribonucleoside 5'-diphosphate + phosphate + H(+). It carries out the reaction a ribonucleoside 5'-diphosphate + H2O = a ribonucleoside 5'-phosphate + phosphate + H(+). Has nucleoside phosphatase activity towards nucleoside triphosphates and nucleoside diphosphates. The chain is Nucleoside triphosphate/diphosphate phosphatase from Streptococcus uberis (strain ATCC BAA-854 / 0140J).